Consider the following 309-residue polypeptide: Olfactory receptor 10J5 (309 aa).

Over 1 to 25 (MKRKNFTEVSEFIFLGFSSFGKHQI) the chain is Extracellular. The N-linked (GlcNAc...) asparagine glycan is linked to Asn-5. The helical transmembrane segment at 26–46 (TLFVVFLTVYILTLVANIIIV) threads the bilayer. Over 47 to 54 (TIICIDHH) the chain is Cytoplasmic. A helical membrane pass occupies residues 55 to 75 (LHTPMYFFLSMLASSETVYTL). The Extracellular segment spans residues 76–99 (VIVPRMLLSLIFHNQPISLAGCAT). Cysteines 97 and 188 form a disulfide. The helical transmembrane segment at 100–120 (QMFFFVILATNNCFLLTAMGY) threads the bilayer. At 121–139 (DRYVAICRPLRYTVIMSKG) the chain is on the cytoplasmic side. Residues 140 to 160 (LCAQLVCGSFGIGLTMAVLHV) form a helical membrane-spanning segment. The Extracellular portion of the chain corresponds to 161 to 196 (TAMFNLPFCGTVVDHFFCDIYPVMKLSCIDTTINEI). Residues 197 to 216 (INYGVSSFVIFVPIGLIFIS) form a helical membrane-spanning segment. Residues 217–236 (YVLVISSILQIASAEGRKKT) are Cytoplasmic-facing. The chain crosses the membrane as a helical span at residues 237 to 257 (FATCVSHLTVVIVHCGCASIA). Residues 258–270 (YLKPKSESSIEKD) are Extracellular-facing. A helical transmembrane segment spans residues 271-291 (LVLSVTYTIITPLLNPVVYSL). Residues 292–309 (RNKEVKDALCRVVGRNIS) are Cytoplasmic-facing.

It belongs to the G-protein coupled receptor 1 family. In terms of tissue distribution, expressed in both the aorta, the coronary artery and umbilical vein endothelial cells (HUVECs) (at protein level).

It is found in the cell membrane. Its function is as follows. Olfactory receptor. Activated by the synthetic floral odorant, lyral, and by alpha-cedrene, a sesquiterpene constituent of cedarwood oil. Its activation increases intracellular Ca(2+). Acts as a key regulator of myogenesis through its actions on cell migration and adhesion by activating the Ca(2+)-dependent AKT signal transduction pathway. Also acts as a regulator of angiogenesis. Moreover, plays a role in the regulation of lipid accumulation in hepatocytes via the cAMP-PKA pathway. May be involved in sperm chemotaxis and motility. This Homo sapiens (Human) protein is Olfactory receptor 10J5.